The following is a 180-amino-acid chain: Endoribonuclease YbeY (180 aa).

Zn(2+) is bound by residues H118, H122, and H128.

It belongs to the endoribonuclease YbeY family. It depends on Zn(2+) as a cofactor.

The protein resides in the cytoplasm. In terms of biological role, single strand-specific metallo-endoribonuclease involved in late-stage 70S ribosome quality control and in maturation of the 3' terminus of the 16S rRNA. This Rhodococcus opacus (strain B4) protein is Endoribonuclease YbeY.